A 230-amino-acid polypeptide reads, in one-letter code: Transcription factor bHLH147 (230 aa).

Residues 1 to 17 show a composition bias toward polar residues; it reads MESISPVSNQLLQPTTT. Residues 1 to 52 form a disordered region; sequence MESISPVSNQLLQPTTTSSNSDRSRRKRKKKSSPSSVEKSPSPSISLEKWRS. Low complexity predominate over residues 33–46; sequence SPSSVEKSPSPSIS. One can recognise a bHLH domain in the interval 147–196; sequence KQRATVLRLKAKGLPAVQRKVKVLSRLVPGCRKQSLPVVLEETTDYIAAM. The segment at 210 to 230 is disordered; that stretch reads VSSSPPPPTPGHEGGQTHMLG.

As to quaternary structure, homodimer. Interacts with PRE3.

The protein resides in the nucleus. In terms of biological role, atypical bHLH transcription factor probably unable to bind DNA. Negatively regulates brassinosteroid signaling. This is Transcription factor bHLH147 (BHLH147) from Arabidopsis thaliana (Mouse-ear cress).